Here is a 1052-residue protein sequence, read N- to C-terminus: Malignant fibrous histiocytoma-amplified sequence 1 (1052 aa).

The residue at position 2 (alanine 2) is an N-acetylalanine. LRR repeat units lie at residues 64-85, 88-109, 112-133, 136-157, 159-180, 182-203, 205-226, 228-249, 251-272, 274-296, 297-318, 320-341, and 343-364; these read DIEA…LGSA, SLRV…VAEL, HLTE…VVSA, ELRK…LGAL, HLEE…LSCL, RLRT…LLQL, ALEE…ISAL, ALKI…FCEL, SLES…FSCL, RLKM…LPLA, GLEE…ISGL, RLLT…IVEL, and GLEE…FGQL. The segment at 64–364 is required for interaction with PJA2; the sequence is DIEALNLGNN…AVLPDHFGQL (301 aa). The required for interaction with PPP2R2A stretch occupies residues 64–649; that stretch reads DIEALNLGNN…DKLLSVAEHR (586 aa). One can recognise a Roc domain in the interval 403 to 649; the sequence is QPAVQPRLKL…DKLLSVAEHR (247 aa). The residue at position 601 (lysine 601) is an N6-acetyllysine.

As to quaternary structure, interacts with RAF1. Interacts with HSPD1. Interacts with PPP2CA; retains PPP2CA into the cytoplasm and excludes it from the nucleus. Interacts with PPP2R2A; the interaction is direct. Interacts with PJA2. Post-translationally, ubiquitinated. Ubiquitination by PJA2 does not lead MFHAS1 to proteasomal degradation but positively regulates its function in polarization of macrophages. As to expression, ubiquitously expressed. Overexpressed in malignant fibrous histiocytomas. Expressed in red blood cells (at protein level).

The protein localises to the cytoplasm. Probable GTP-binding protein. Functions in innate immunity and more specifically the inflammatory response as a regulator of the Toll-like receptor TLR2 and TLR4 signaling pathways. Negatively regulates the part of the TLR4 signaling pathway that leads to the activation of the transcription factor AP-1. By retaining the phosphatase complex PP2A into the cytoplasm, prevents the dephosphorylation of the AP-1 subunit JUN which is required for proper activation of the transcription factor. Both inhibits and activates the TLR2-dependent signaling pathway. Positively regulates the TLR2 signaling pathway to activate specifically the downstream p38 and JNK MAP kinases and promote the polarization of macrophages toward the pro-inflammatory M1 phenotype. It may also play a role in the regulation of inflammation induced by high glucose through the PKB/AKT signaling pathway. Also involved in erythrocyte differentiation through activation of the ERK1/ERK2 signaling pathway. This Homo sapiens (Human) protein is Malignant fibrous histiocytoma-amplified sequence 1.